A 1134-amino-acid chain; its full sequence is DNA polymerase II large subunit (1134 aa).

Belongs to the archaeal DNA polymerase II family. As to quaternary structure, heterodimer of a large subunit and a small subunit.

The enzyme catalyses DNA(n) + a 2'-deoxyribonucleoside 5'-triphosphate = DNA(n+1) + diphosphate. It carries out the reaction Exonucleolytic cleavage in the 3'- to 5'-direction to yield nucleoside 5'-phosphates.. Functionally, possesses two activities: a DNA synthesis (polymerase) and an exonucleolytic activity that degrades single-stranded DNA in the 3'- to 5'-direction. Has a template-primer preference which is characteristic of a replicative DNA polymerase. The chain is DNA polymerase II large subunit from Methanocella arvoryzae (strain DSM 22066 / NBRC 105507 / MRE50).